The following is a 797-amino-acid chain: Hid-1 family protein P27G11.12 (797 aa).

The protein belongs to the hid-1 family.

Its subcellular location is the cytoplasm. It localises to the nucleus. The protein is Hid-1 family protein P27G11.12 of Schizosaccharomyces pombe (strain 972 / ATCC 24843) (Fission yeast).